Here is a 976-residue protein sequence, read N- to C-terminus: Mast/stem cell growth factor receptor Kit (976 aa).

Positions 1–25 are cleaved as a signal peptide; that stretch reads MRGARGAWDFLCVLLLLLRVQTGSS. Over 26 to 524 the chain is Extracellular; that stretch reads QPSVSPGEPS…QIHPHTLFTP (499 aa). Ig-like C2-type domains lie at 27–112, 121–205, 212–308, 317–410, and 413–507; these read PSVS…VFVR, DRSL…LKVR, PVVS…LEVV, PMIN…VYVN, and PEIL…FNFA. A disulfide bridge links Cys58 with Cys97. N-linked (GlcNAc...) asparagine glycosylation is found at Asn130 and Asn145. 3 disulfide bridges follow: Cys136–Cys186, Cys151–Cys183, and Cys233–Cys290. N-linked (GlcNAc...) asparagine glycans are attached at residues Asn283, Asn293, Asn300, Asn320, Asn352, Asn367, Asn463, and Asn486. A disulfide bridge connects residues Cys428 and Cys491. The helical transmembrane segment at 525–545 threads the bilayer; it reads LLIGFVIVAGMMCIIVMILTY. Residues 546 to 976 are Cytoplasmic-facing; it reads KYLQKPMYEV…SQPLLVHDDV (431 aa). Tyr547, Tyr553, Tyr568, and Tyr570 each carry phosphotyrosine; by autocatalysis. Tyr568 lines the Mg(2+) pocket. An important for interaction with phosphotyrosine-binding proteins region spans residues 568–570; sequence YVY. The Protein kinase domain occupies 589-937; it reads LSFGKTLGAG…ISESTNHIYS (349 aa). Residues 596 to 603, Lys623, and 671 to 677 each bind ATP; these read GAGAFGKV and EYCCYGD. 3 positions are modified to phosphotyrosine; by autocatalysis: Tyr703, Tyr721, and Tyr730. Phosphoserine; by PKC/PRKCA is present on residues Ser741 and Ser746. Residue Asp792 is the Proton acceptor of the active site. Arg796 is an ATP binding site. Mg(2+) contacts are provided by Asn797 and Asp810. Ser821 is subject to Phosphoserine. At Tyr823 the chain carries Phosphotyrosine; by autocatalysis. Ser891 is modified (phosphoserine). Phosphotyrosine; by autocatalysis is present on residues Tyr900 and Tyr936. Ser959 bears the Phosphoserine mark.

The protein belongs to the protein kinase superfamily. Tyr protein kinase family. CSF-1/PDGF receptor subfamily. In terms of assembly, monomer in the absence of bound KITLG/SCF. Homodimer in the presence of bound KITLG/SCF, forming a heterotetramer with two KITLG/SCF molecules. Interacts (via phosphorylated tyrosine residues) with the adapter proteins GRB2 and GRB7 (via SH2 domain), and SH2B2/APS. Interacts (via C-terminus) with MPDZ (via the tenth PDZ domain). Interacts (via phosphorylated tyrosine residues) with PIK3R1 and PIK3 catalytic subunit. Interacts (via phosphorylated tyrosine) with CRK (isoform Crk-II), FYN, SHC1 and MATK/CHK (via SH2 domain). Interacts with LYN and FES/FPS. Interacts (via phosphorylated tyrosine residues) with the protein phosphatases PTPN6/SHP-1 (via SH2 domain), PTPN11/SHP-2 (via SH2 domain) and PTPRU. Interacts with PLCG1. Interacts with DOK1 and TEC. Interacts (KITLG/SCF-bound) with IL1RL1. Interacts with IL1RAP (independent of stimulation with KITLG/SCF). A mast cell-specific KITLG/SCF-induced interleukin-33 signaling complex contains IL1RL1, IL1RAP, KIT and MYD88. In terms of processing, ubiquitinated by SOCS6. KIT is rapidly ubiquitinated after autophosphorylation induced by KITLG/SCF binding, leading to internalization and degradation. Post-translationally, autophosphorylated on tyrosine residues. KITLG/SCF binding enhances autophosphorylation. Isoform 1 shows low levels of tyrosine phosphorylation in the absence of added KITLG/SCF (in vitro). Kinase activity is down-regulated by phosphorylation on serine residues by protein kinase C family members. Phosphorylation at Tyr-568 is required for interaction with PTPN11/SHP-2, CRK (isoform Crk-II) and members of the SRC tyrosine-protein kinase family. Phosphorylation at Tyr-570 is required for interaction with PTPN6/SHP-1. Phosphorylation at Tyr-703, Tyr-823 and Tyr-936 is important for interaction with GRB2. Phosphorylation at Tyr-721 is important for interaction with PIK3R1. Phosphorylation at Tyr-823 and Tyr-936 is important for interaction with GRB7. As to expression, in testis, detected in spermatogonia in the basal layer and in interstitial Leydig cells but not in Sertoli cells or spermatocytes inside the seminiferous tubules (at protein level). Expression is maintained in ejaculated spermatozoa (at protein level).

It is found in the cell membrane. The protein resides in the cytoplasm. The catalysed reaction is L-tyrosyl-[protein] + ATP = O-phospho-L-tyrosyl-[protein] + ADP + H(+). Present in an inactive conformation in the absence of bound ligand. KITLG/SCF binding leads to dimerization and activation by autophosphorylation on tyrosine residues. Activity is down-regulated by PRKCA-mediated phosphorylation on serine residues. Inhibited by imatinib/STI-571 (Gleevec) and sunitinib; these compounds maintain the kinase in an inactive conformation. Its function is as follows. Tyrosine-protein kinase that acts as a cell-surface receptor for the cytokine KITLG/SCF and plays an essential role in the regulation of cell survival and proliferation, hematopoiesis, stem cell maintenance, gametogenesis, mast cell development, migration and function, and in melanogenesis. In response to KITLG/SCF binding, KIT can activate several signaling pathways. Phosphorylates PIK3R1, PLCG1, SH2B2/APS and CBL. Activates the AKT1 signaling pathway by phosphorylation of PIK3R1, the regulatory subunit of phosphatidylinositol 3-kinase. Activated KIT also transmits signals via GRB2 and activation of RAS, RAF1 and the MAP kinases MAPK1/ERK2 and/or MAPK3/ERK1. Promotes activation of STAT family members STAT1, STAT3, STAT5A and STAT5B. Activation of PLCG1 leads to the production of the cellular signaling molecules diacylglycerol and inositol 1,4,5-trisphosphate. KIT signaling is modulated by protein phosphatases, and by rapid internalization and degradation of the receptor. Activated KIT promotes phosphorylation of the protein phosphatases PTPN6/SHP-1 and PTPRU, and of the transcription factors STAT1, STAT3, STAT5A and STAT5B. Promotes phosphorylation of PIK3R1, CBL, CRK (isoform Crk-II), LYN, MAPK1/ERK2 and/or MAPK3/ERK1, PLCG1, SRC and SHC1. This chain is Mast/stem cell growth factor receptor Kit (KIT), found in Homo sapiens (Human).